The following is a 112-amino-acid chain: Protein BEX5 (112 aa).

Composition is skewed to basic and acidic residues over residues 1–12 (MEKDPKERREEE) and 30–51 (PKPR…REDM). The interval 1 to 56 (MEKDPKERREEEQAPVQNEEACPMGGGEGPKPRENVRGDWDPPAQDFREDMPNGLV) is disordered. The tract at residues 101–105 (HHDHH) is his cluster. C109 serves as a coordination point for Zn(2+).

The protein belongs to the BEX family. Ubiquitinated. Degraded by the proteasome.

Its subcellular location is the cytoplasm. This is Protein BEX5 (BEX5) from Bos taurus (Bovine).